Consider the following 448-residue polypeptide: Trigger factor (448 aa).

Residues 167 to 253 (GSIVRVDFVE…VKDIKRRDIP (87 aa)) form the PPIase FKBP-type domain.

It belongs to the FKBP-type PPIase family. Tig subfamily.

The protein resides in the cytoplasm. It catalyses the reaction [protein]-peptidylproline (omega=180) = [protein]-peptidylproline (omega=0). In terms of biological role, involved in protein export. Acts as a chaperone by maintaining the newly synthesized protein in an open conformation. Functions as a peptidyl-prolyl cis-trans isomerase. The polypeptide is Trigger factor (Borrelia recurrentis (strain A1)).